A 962-amino-acid chain; its full sequence is MTTETLTQLEQHELFIRRHIGPDSADQQEMLNFVGAESLEDLTQQIVPESIRLGRDLAVGSACGEAEGLASIRKYADKNKVFKSYIGMGYYGTIVPSVIQRNVFENPGWYTAYTPYQPEIAQGRLEAILNFQQLSMDLTGLDLASASLLDEATAAAEAMALAKRVSKAKKANIFFIADDVFPQTIDVVKTRAECFGFEIVVGPASEAVNYELFGALFQYTNHYGQITDFTELFAALQEKKAVVTVAADIMSLVSLKSPGSMGADVVFGSAQRFGVPMGFGGPHAAFFVTRDQHKRSLPGRIIGVSQDTRGNRALRMAMQTREQHIRREKANSNICTAQVLLANMASFYAVFHGPQGLKIIADRIHRLADIFAAGLKAKGVELVNNTWFDTVSFKVADSAAAQARAIAGEVNLRIDSDGILGVAMAETTTREDVAQLFDIVLGEGHGLDVAAIDADIIANGSNSIPAELVRQDAILEHPTFNRYHSETEMMRYIKRLENKDLALNHSMISLGSCTMKLNAATEMMPVSWPEFGNMHPFCPQDQAQGYAELIEELSNWLVDITGYDAMCMQPNSGASGEYAGLLAIKKYHESRGEGHRNVCLIPQSAHGTNPASAQLAGMKIVVTACDKQGNVDMEDLKAKAAEVAENLSCIMVTYPSTHGVYEETISEICEVIHQHGGQVYLDGANMNAQVGLTSPGSIGADVSHLNLHKTFAIPHGGGGPGMGPIGVKAHLAPFVAGHAVVKHGRESDNNGAVSAAPYGSASILPITWMYIKLLGYQGLRQSTQMALLNANYVMKKLSAHYPVLYTGRNDRVAHECIIDLRPLKEASGVTEMDIAKRLNDYGFHAPTMSFPVAGTLMIEPTESESKAELDRFIEAMVAIRGEIAKVEAGEWPADNNPLHNAPHTMADIMDSEFDSRPYSRETAVFPTAAVKANKFWPTVNRIDDVYGDRNLMCSCAPIDDYK.

Position 709 is an N6-(pyridoxal phosphate)lysine (lysine 709).

Belongs to the GcvP family. In terms of assembly, the glycine cleavage system is composed of four proteins: P, T, L and H. The cofactor is pyridoxal 5'-phosphate.

The catalysed reaction is N(6)-[(R)-lipoyl]-L-lysyl-[glycine-cleavage complex H protein] + glycine + H(+) = N(6)-[(R)-S(8)-aminomethyldihydrolipoyl]-L-lysyl-[glycine-cleavage complex H protein] + CO2. In terms of biological role, the glycine cleavage system catalyzes the degradation of glycine. The P protein binds the alpha-amino group of glycine through its pyridoxal phosphate cofactor; CO(2) is released and the remaining methylamine moiety is then transferred to the lipoamide cofactor of the H protein. The polypeptide is Glycine dehydrogenase (decarboxylating) (Shewanella loihica (strain ATCC BAA-1088 / PV-4)).